Reading from the N-terminus, the 206-residue chain is FMN-dependent NADH:quinone oxidoreductase (206 aa).

FMN contacts are provided by residues 15 to 17 (SVS), 94 to 97 (MYNF), and 138 to 141 (TRGG).

This sequence belongs to the azoreductase type 1 family. In terms of assembly, homodimer. FMN is required as a cofactor.

The catalysed reaction is 2 a quinone + NADH + H(+) = 2 a 1,4-benzosemiquinone + NAD(+). The enzyme catalyses N,N-dimethyl-1,4-phenylenediamine + anthranilate + 2 NAD(+) = 2-(4-dimethylaminophenyl)diazenylbenzoate + 2 NADH + 2 H(+). Its function is as follows. Quinone reductase that provides resistance to thiol-specific stress caused by electrophilic quinones. Also exhibits azoreductase activity. Catalyzes the reductive cleavage of the azo bond in aromatic azo compounds to the corresponding amines. The sequence is that of FMN-dependent NADH:quinone oxidoreductase from Sinorhizobium fredii (strain NBRC 101917 / NGR234).